An 86-amino-acid chain; its full sequence is Large ribosomal subunit protein bL31B (86 aa).

This sequence belongs to the bacterial ribosomal protein bL31 family. Type B subfamily. Part of the 50S ribosomal subunit.

The polypeptide is Large ribosomal subunit protein bL31B (Salmonella agona (strain SL483)).